Reading from the N-terminus, the 475-residue chain is Ribulose bisphosphate carboxylase large chain (475 aa).

Positions 1–2 are excised as a propeptide; it reads MS. Position 3 is an N-acetylproline (P3). K14 is subject to N6,N6,N6-trimethyllysine. Substrate-binding residues include N123 and T173. K175 serves as the catalytic Proton acceptor. Substrate is bound at residue K177. Residues K201, D203, and E204 each contribute to the Mg(2+) site. K201 carries the N6-carboxylysine modification. Residue H294 is the Proton acceptor of the active site. Substrate is bound by residues R295, H327, and S379.

Belongs to the RuBisCO large chain family. Type I subfamily. In terms of assembly, heterohexadecamer of 8 large chains and 8 small chains; disulfide-linked. The disulfide link is formed within the large subunit homodimers. Mg(2+) serves as cofactor. In terms of processing, the disulfide bond which can form in the large chain dimeric partners within the hexadecamer appears to be associated with oxidative stress and protein turnover.

The protein localises to the plastid. It localises to the chloroplast. It carries out the reaction 2 (2R)-3-phosphoglycerate + 2 H(+) = D-ribulose 1,5-bisphosphate + CO2 + H2O. It catalyses the reaction D-ribulose 1,5-bisphosphate + O2 = 2-phosphoglycolate + (2R)-3-phosphoglycerate + 2 H(+). Its function is as follows. RuBisCO catalyzes two reactions: the carboxylation of D-ribulose 1,5-bisphosphate, the primary event in carbon dioxide fixation, as well as the oxidative fragmentation of the pentose substrate in the photorespiration process. Both reactions occur simultaneously and in competition at the same active site. The polypeptide is Ribulose bisphosphate carboxylase large chain (Populus tremuloides (Quaking aspen)).